A 262-amino-acid polypeptide reads, in one-letter code: Putative glycyl-radical enzyme activating enzyme HI_0520 (262 aa).

The region spanning 20–262 (VEGQGNRSSI…CGINKILTIL (243 aa)) is the Radical SAM core domain. Residues Cys-34, Cys-38, and Cys-41 each coordinate [4Fe-4S] cluster. Residues 40–42 (YCH), Gly-81, and 130–132 (DLK) contribute to the S-adenosyl-L-methionine site.

Belongs to the organic radical-activating enzymes family. The cofactor is [4Fe-4S] cluster.

The enzyme catalyses glycyl-[protein] + reduced [flavodoxin] + S-adenosyl-L-methionine = glycin-2-yl radical-[protein] + semiquinone [flavodoxin] + 5'-deoxyadenosine + L-methionine + H(+). The polypeptide is Putative glycyl-radical enzyme activating enzyme HI_0520 (Haemophilus influenzae (strain ATCC 51907 / DSM 11121 / KW20 / Rd)).